Reading from the N-terminus, the 620-residue chain is 1-deoxy-D-xylulose-5-phosphate synthase (620 aa).

Thiamine diphosphate is bound by residues His-80 and 121–123 (GHS). Asp-152 is a binding site for Mg(2+). Thiamine diphosphate-binding positions include 153–154 (GA), Asn-181, Tyr-288, and Glu-370. Asn-181 lines the Mg(2+) pocket.

This sequence belongs to the transketolase family. DXPS subfamily. Homodimer. Mg(2+) serves as cofactor. The cofactor is thiamine diphosphate.

It catalyses the reaction D-glyceraldehyde 3-phosphate + pyruvate + H(+) = 1-deoxy-D-xylulose 5-phosphate + CO2. The protein operates within metabolic intermediate biosynthesis; 1-deoxy-D-xylulose 5-phosphate biosynthesis; 1-deoxy-D-xylulose 5-phosphate from D-glyceraldehyde 3-phosphate and pyruvate: step 1/1. Functionally, catalyzes the acyloin condensation reaction between C atoms 2 and 3 of pyruvate and glyceraldehyde 3-phosphate to yield 1-deoxy-D-xylulose-5-phosphate (DXP). The polypeptide is 1-deoxy-D-xylulose-5-phosphate synthase (Cronobacter sakazakii (strain ATCC BAA-894) (Enterobacter sakazakii)).